Reading from the N-terminus, the 102-residue chain is Small ribosomal subunit protein eS24 (102 aa).

Belongs to the eukaryotic ribosomal protein eS24 family.

This Methanobrevibacter smithii (strain ATCC 35061 / DSM 861 / OCM 144 / PS) protein is Small ribosomal subunit protein eS24.